A 971-amino-acid polypeptide reads, in one-letter code: Protein ALWAYS EARLY 1 (971 aa).

Residues 1 to 11 (MAPTRKSKSVN) are compositionally biased toward basic residues. Disordered regions lie at residues 1–40 (MAPTRKSKSVNKRFTNEASPDINFGSASKTKQRKKKLADK), 117–137 (SESEGEDHDASEVTRKHLKRK), 197–260 (IEDF…MFEN), 326–371 (GLLE…GLED), and 421–507 (PKES…KISL). The region spanning 40–98 (KLGPQWTKRELVRFYDAYRKYVGDWKKVAAAVRNNRSVEMVETLFCMNRAYLSLPEGTA) is the SANT domain. 3 stretches are compositionally biased toward basic and acidic residues: residues 209-219 (KQLDADDDASR), 332-350 (SSPHWEEERKTNNVDKKSN), and 424-440 (STQDKSLYTKESAEVDS). Polar residues predominate over residues 450–470 (SSQGPAKQLKTAKTTVESSSA).

In terms of tissue distribution, expressed ubiquitously in vegetative and reproductive tissues.

It localises to the nucleus. The polypeptide is Protein ALWAYS EARLY 1 (ALY1) (Arabidopsis thaliana (Mouse-ear cress)).